Consider the following 270-residue polypeptide: tRNA pseudouridine synthase A (270 aa).

Asp51 functions as the Nucleophile in the catalytic mechanism. A substrate-binding site is contributed by Tyr109.

The protein belongs to the tRNA pseudouridine synthase TruA family. As to quaternary structure, homodimer.

It catalyses the reaction uridine(38/39/40) in tRNA = pseudouridine(38/39/40) in tRNA. Functionally, formation of pseudouridine at positions 38, 39 and 40 in the anticodon stem and loop of transfer RNAs. In Burkholderia multivorans (strain ATCC 17616 / 249), this protein is tRNA pseudouridine synthase A.